Consider the following 499-residue polypeptide: Probable cytosol aminopeptidase (499 aa).

Residues Lys-271 and Asp-276 each coordinate Mn(2+). Residue Lys-283 is part of the active site. Mn(2+) is bound by residues Asp-294, Asp-353, and Glu-355. The active site involves Arg-357.

This sequence belongs to the peptidase M17 family. Mn(2+) is required as a cofactor.

It localises to the cytoplasm. It catalyses the reaction Release of an N-terminal amino acid, Xaa-|-Yaa-, in which Xaa is preferably Leu, but may be other amino acids including Pro although not Arg or Lys, and Yaa may be Pro. Amino acid amides and methyl esters are also readily hydrolyzed, but rates on arylamides are exceedingly low.. The enzyme catalyses Release of an N-terminal amino acid, preferentially leucine, but not glutamic or aspartic acids.. Its function is as follows. Presumably involved in the processing and regular turnover of intracellular proteins. Catalyzes the removal of unsubstituted N-terminal amino acids from various peptides. The polypeptide is Probable cytosol aminopeptidase (Bordetella bronchiseptica (strain ATCC BAA-588 / NCTC 13252 / RB50) (Alcaligenes bronchisepticus)).